Reading from the N-terminus, the 206-residue chain is GTP cyclohydrolase 1 (206 aa).

Zn(2+)-binding residues include cysteine 95, histidine 98, and cysteine 166.

This sequence belongs to the GTP cyclohydrolase I family. In terms of assembly, toroid-shaped homodecamer, composed of two pentamers of five dimers.

It catalyses the reaction GTP + H2O = 7,8-dihydroneopterin 3'-triphosphate + formate + H(+). Its pathway is cofactor biosynthesis; 7,8-dihydroneopterin triphosphate biosynthesis; 7,8-dihydroneopterin triphosphate from GTP: step 1/1. This chain is GTP cyclohydrolase 1, found in Bartonella henselae (strain ATCC 49882 / DSM 28221 / CCUG 30454 / Houston 1) (Rochalimaea henselae).